We begin with the raw amino-acid sequence, 650 residues long: uncharacterized protein (650 aa).

This is an uncharacterized protein from Caenorhabditis elegans.